We begin with the raw amino-acid sequence, 296 residues long: NAD kinase (296 aa).

The Proton acceptor role is filled by Asp72. NAD(+)-binding positions include 72 to 73 (DG), 146 to 147 (ND), Arg157, Lys174, Asp176, 187 to 192 (TAYALS), and Gln247.

It belongs to the NAD kinase family. It depends on a divalent metal cation as a cofactor.

It localises to the cytoplasm. The catalysed reaction is NAD(+) + ATP = ADP + NADP(+) + H(+). In terms of biological role, involved in the regulation of the intracellular balance of NAD and NADP, and is a key enzyme in the biosynthesis of NADP. Catalyzes specifically the phosphorylation on 2'-hydroxyl of the adenosine moiety of NAD to yield NADP. This Pseudomonas fluorescens (strain ATCC BAA-477 / NRRL B-23932 / Pf-5) protein is NAD kinase.